The sequence spans 439 residues: NAD-dependent malic enzyme 1 (439 aa).

An ACT domain is found at 9–84 (TLMIETPSVP…GIRLHTVSDE (76 aa)). Catalysis depends on tyrosine 112, which acts as the Proton donor. The active-site Proton acceptor is the lysine 167. A divalent metal cation is bound by residues glutamate 209, aspartate 210, and aspartate 235. NAD(+)-binding positions include 268–271 (LGAA), asparagine 347, and asparagine 373.

It belongs to the malic enzymes family. Requires Mg(2+) as cofactor. It depends on Mn(2+) as a cofactor.

The catalysed reaction is (S)-malate + NAD(+) = pyruvate + CO2 + NADH. It carries out the reaction oxaloacetate + H(+) = pyruvate + CO2. Catalyzes the decarboxylation of malate to pyruvate. Is specific for NAD, cannot use NADP. Can also catalyze the decarboxylation of oxaloacetate. Involved in keeping the ATP levels high. This Bacillus subtilis (strain 168) protein is NAD-dependent malic enzyme 1.